A 473-amino-acid polypeptide reads, in one-letter code: Putative F-box/LRR-repeat protein At3g59170 (473 aa).

Residues 6–54 (KDMINVLPDALLCHILSFLTTKEAASTSLLSRRWRYLLAFVPNLEFDDS) form the F-box domain. LRR repeat units follow at residues 168-194 (TIKI…YLQS), 196-221 (MFDE…VLDG), 229-254 (SFTV…GYMH), 333-364 (VLYL…TIKS), and 365-390 (DPNV…VFQG).

In Arabidopsis thaliana (Mouse-ear cress), this protein is Putative F-box/LRR-repeat protein At3g59170.